Reading from the N-terminus, the 795-residue chain is ATP-dependent RNA helicase DHX15 (795 aa).

The segment at 1–111 (MSKRHRLDLG…HTGHTGHTSL (111 aa)) is disordered. Position 15 is a phosphoserine (Ser-15). The span at 20–62 (AGTDGKDRERDRDREDRSKDRDRERDRGDREREREKEKEKELR) shows a compositional bias: basic and acidic residues. The segment covering 79–110 (ASHSAHSTHSAHSTHSTHSAHSTHTGHTGHTS) has biased composition (low complexity). Residues 147 to 313 (TDILVRHQSF…FDNCPLLTIP (167 aa)) enclose the Helicase ATP-binding domain. Position 160-167 (160-167 (GETGSGKT)) interacts with ATP. The DEAH box signature appears at 260 to 263 (DEAH). The Helicase C-terminal domain maps to 338–518 (TVIQIHMCEE…SVVLQLKKLG (181 aa)). Lys-488 carries the post-translational modification N6-acetyllysine. Lys-786 participates in a covalent cross-link: Glycyl lysine isopeptide (Lys-Gly) (interchain with G-Cter in SUMO2).

Belongs to the DEAD box helicase family. DEAH subfamily. DDX15/PRP43 sub-subfamily. As to quaternary structure, component of the U11/U12 snRNPs that are part of the U12-type spliceosome. Identified in the Intron Large spliceosome complex (IL, also named intron lariat spliceosome), a post-mRNA release spliceosomal complex containing the excised intron, U2, U5 and U6 snRNPs, and splicing factors; the association may be transient. The IL complex exists in two distinct conformations, one with the DHX15 (ILS2) and one without (ILS1). Interacts with TFIP11 (via G-patch domain); indicative for a recruitment to the IL complex. Interacts with SSB/La. Interacts with GPATCH2 (via G-patch domain); promoting the RNA helicase activity. Interacts with NKRF (via G-patch domain); promoting the RNA helicase activity. Interacts with NLRP6. Ubiquitous.

It is found in the nucleus. Its subcellular location is the nucleolus. It catalyses the reaction ATP + H2O = ADP + phosphate + H(+). With respect to regulation, ATPase activity is enhanced upon binding to G-patch domain-containing proteins. G-patch domain-containing proteins act like a brace that tethers mobile sections of DHX15 together, stabilizing a functional conformation with high RNA affinity, thereby promoting the ATPase activity. Functionally, RNA helicase involved in mRNA processing and antiviral innate immunity. Pre-mRNA processing factor involved in disassembly of spliceosomes after the release of mature mRNA. In cooperation with TFIP11 seem to be involved in the transition of the U2, U5 and U6 snRNP-containing IL complex to the snRNP-free IS complex leading to efficient debranching and turnover of excised introns. Plays a key role in antiviral innate immunity by promoting both MAVS-dependent signaling and NLRP6 inflammasome. Acts as an RNA virus sensor: recognizes and binds viral double stranded RNA (dsRNA) and activates the MAVS-dependent signaling to produce interferon-beta and interferon lambda-3 (IFNL3). Involved in intestinal antiviral innate immunity together with NLRP6: recognizes and binds viral dsRNA and promotes activation of the NLRP6 inflammasome in intestinal epithelial cells to restrict infection by enteric viruses. The NLRP6 inflammasome acts by promoting maturation and secretion of IL18 in the extracellular milieu. Also involved in antibacterial innate immunity by promoting Wnt-induced antimicrobial protein expression in Paneth cells. The polypeptide is ATP-dependent RNA helicase DHX15 (Mus musculus (Mouse)).